Here is a 405-residue protein sequence, read N- to C-terminus: MHSSSSFIITSLEEEEKKPPAHHLHQQSIEDVGSVTSSATLLLLDSATWMMPSSTTQPHISEISGNECAACAQPILDRYVFTVLGKCWHQSCLRCCDCRAPMSMTCFSRDGLILCKTDFSRRYSQRCAGCDGKLEKEDLVRRARDKVFHIRCFQCSVCQRLLDTGDQLYIMEGNRFVCQSDFQTATKTSTPTSIHRPVSNGSECNSDVEEDNVDACDEVGLDDGEGDCGKDNSDDSNSAKRRGPRTTIKAKQLETLKNAFAATPKPTRHIREQLAAETGLNMRVIQVWFQNRRSKERRMKQLRFGGYRQSRRPRRDDIVDMFPNDQQFYPPPPPSNVQFFCDPYTTSPNNPETIQMAPQFAVPTENMNMVPEPYTEQSATPPEFNEDTFACIYSTDLGKPTPVSW.

Glycyl lysine isopeptide (Lys-Gly) (interchain with G-Cter in SUMO) cross-links involve residues Lys17 and Lys18. LIM zinc-binding domains follow at residues 68-124 (CAAC…RRYS) and 127-187 (CAGC…TATK). Positions 189 to 205 (STPTSIHRPVSNGSECN) are enriched in polar residues. 2 disordered regions span residues 189-208 (STPT…NSDV) and 224-246 (GEGD…GPRT). A DNA-binding region (homeobox) is located at residues 241-300 (RRGPRTTIKAKQLETLKNAFAATPKPTRHIREQLAAETGLNMRVIQVWFQNRRSKERRMK).

As to expression, expressed in ADL, AVJL, AIZL, RICL, RIF and AVG neurons.

The protein localises to the nucleus. In terms of biological role, probable transcription factor which is required for asymmetric division of vulval blast cells. Involved in olfactory plasticity probably by regulating the expression of transcription factor mbr-1 in RIF neurons. Plays a role in the chemorepulsive response toward ascaroside pheromones mediated by the ADL sensory neurons, probably by regulating E-box motif 5'-CANNTG-3' containing target genes in the ADL neurons. Plays a role in the differentiation of the ADL sensory neurons. This Caenorhabditis elegans protein is Protein lin-11 (lin-11).